The following is a 64-amino-acid chain: Ferredoxin-2 (64 aa).

2 consecutive 4Fe-4S ferredoxin-type domains span residues 3–31 and 34–64; these read KYLYLDQDECMACESCVELCPEAFRMSSA and YAEVIDPNTTAECVEDAISTCPVECIEWREE. [4Fe-4S] cluster is bound by residues Cys-12, Cys-15, Cys-18, and Cys-54.

Homodimer. The cofactor is [4Fe-4S] cluster.

Its function is as follows. Ferredoxins are iron-sulfur proteins that transfer electrons in a wide variety of metabolic reactions. The sequence is that of Ferredoxin-2 from Nitratidesulfovibrio vulgaris (strain DSM 19637 / Miyazaki F) (Desulfovibrio vulgaris).